We begin with the raw amino-acid sequence, 666 residues long: tRNA 5-methylaminomethyl-2-thiouridine biosynthesis bifunctional protein MnmC (666 aa).

The tract at residues methionine 1–glutamate 253 is tRNA (mnm(5)s(2)U34)-methyltransferase. Residues valine 283–proline 666 form an FAD-dependent cmnm(5)s(2)U34 oxidoreductase region.

The protein in the N-terminal section; belongs to the methyltransferase superfamily. tRNA (mnm(5)s(2)U34)-methyltransferase family. This sequence in the C-terminal section; belongs to the DAO family. FAD is required as a cofactor.

It is found in the cytoplasm. The catalysed reaction is 5-aminomethyl-2-thiouridine(34) in tRNA + S-adenosyl-L-methionine = 5-methylaminomethyl-2-thiouridine(34) in tRNA + S-adenosyl-L-homocysteine + H(+). In terms of biological role, catalyzes the last two steps in the biosynthesis of 5-methylaminomethyl-2-thiouridine (mnm(5)s(2)U) at the wobble position (U34) in tRNA. Catalyzes the FAD-dependent demodification of cmnm(5)s(2)U34 to nm(5)s(2)U34, followed by the transfer of a methyl group from S-adenosyl-L-methionine to nm(5)s(2)U34, to form mnm(5)s(2)U34. This is tRNA 5-methylaminomethyl-2-thiouridine biosynthesis bifunctional protein MnmC from Legionella pneumophila subsp. pneumophila (strain Philadelphia 1 / ATCC 33152 / DSM 7513).